A 117-amino-acid chain; its full sequence is Hainantoxin-XV-5 (117 aa).

Positions 1–20 (MKLCAVIIASLLVCVAVASS) are cleaved as a signal peptide. The disordered stretch occupies residues 20-55 (SSDNQKEFAQEKEMTREETQSLGEHEKDDEVTGSEE). The propeptide occupies 21-56 (SDNQKEFAQEKEMTREETQSLGEHEKDDEVTGSEER). Over residues 23-55 (NQKEFAQEKEMTREETQSLGEHEKDDEVTGSEE) the composition is skewed to basic and acidic residues. Disulfide bonds link Cys58/Cys72, Cys65/Cys78, Cys69/Cys115, and Cys71/Cys91.

It belongs to the neurotoxin 03 (Tx2) family. 02 subfamily. HNTX-XV sub-subfamily. Expressed by the venom gland.

It localises to the secreted. Its function is as follows. Putative ion channel inhibitor. The protein is Hainantoxin-XV-5 of Cyriopagopus hainanus (Chinese bird spider).